The chain runs to 354 residues: tRNA-specific 2-thiouridylase MnmA (354 aa).

ATP contacts are provided by residues 6 to 13 (LLSGGVDS) and L33. The active-site Nucleophile is the C100. The cysteines at positions 100 and 195 are disulfide-linked. An ATP-binding site is contributed by G123. The segment at 145–147 (KDQ) is interaction with tRNA. Catalysis depends on C195, which acts as the Cysteine persulfide intermediate.

It belongs to the MnmA/TRMU family.

It is found in the cytoplasm. The catalysed reaction is S-sulfanyl-L-cysteinyl-[protein] + uridine(34) in tRNA + AH2 + ATP = 2-thiouridine(34) in tRNA + L-cysteinyl-[protein] + A + AMP + diphosphate + H(+). Catalyzes the 2-thiolation of uridine at the wobble position (U34) of tRNA, leading to the formation of s(2)U34. The sequence is that of tRNA-specific 2-thiouridylase MnmA from Borrelia duttonii (strain Ly).